The sequence spans 442 residues: MESLSSLYRDHIATLQQRTREILQRQQLEGLLIHAGEPISRFLDDHDYPFKVNPQFKAWFPVTRVPHCWLWVDGVNKPKLWYYLSIDYWYLVEPLPDSFWTPYVDIVPFADPDEIAALLPPRDNVAYLGSSPHRASLLGMERDFINPQPVLDYLHYHRAYKTDYELACMREAQKSAVNGHRAAKEAFLSGMCEFDINIAYLSACGHRDTDVPYDNIIALNEHAAVLHYTRLDQHTPEHVMSFLIDAGTEYNGYAADLTRTYAAQKDSDFAALIAAMNSEQQALIATIETGVNYIDYHLQMHGRIAKLLKQFDILSGLSEDAMVTEGLTLPFLPHGLGHPLGLQVHDVAGFMQDDRGTSLAPQSRYTHLRCTRVLQPRMVLTIEPGLYFIESLLAPWRANTFGRHFNWSRIESFKPYGGIRIEDNIVIHDNHIENMTRALKLE.

Residues aspartate 245, aspartate 256, histidine 338, glutamate 383, and glutamate 422 each coordinate Mn(2+).

Belongs to the peptidase M24B family. Bacterial-type prolidase subfamily. The cofactor is Mn(2+).

It carries out the reaction Xaa-L-Pro dipeptide + H2O = an L-alpha-amino acid + L-proline. Its function is as follows. Splits dipeptides with a prolyl residue in the C-terminal position. The sequence is that of Xaa-Pro dipeptidase from Sodalis glossinidius (strain morsitans).